The chain runs to 405 residues: uncharacterized protein (405 aa).

Residues 1–18 (MPEPVAEPALNGLRLNLR) lie on the Cytoplasmic side of the membrane. A helical membrane pass occupies residues 19–39 (IVSIVMFNFASYLTIGLPLAV). Over 40–46 (LPGYVHD) the chain is Periplasmic. A helical transmembrane segment spans residues 47-67 (VMGFSAFWAGLVISLQYFATL). At 68–84 (LSRPHAGRYADSLGPKK) the chain is on the cytoplasmic side. Residues 85–105 (IVVFGLCGCFLSGLGYLTAGL) form a helical membrane-spanning segment. Position 106 (Thr106) is a topological domain, periplasmic. Residues 107–127 (ASLPVISLLLLCLGRVILGIG) traverse the membrane as a helical segment. Topologically, residues 128–155 (QSFAGTGSTLWGVGVVGSLHIGRVISWN) are cytoplasmic. Residues 156-176 (GIVTYGAMAMGAPLGVVFYHW) form a helical membrane-spanning segment. A topological domain (periplasmic) is located at residue Gly177. The chain crosses the membrane as a helical span at residues 178–198 (GLQALALIIMGVALVAILLAI). The Cytoplasmic segment spans residues 199-223 (PRPTVKASKGKPLPFRAVLGRVWLY). The chain crosses the membrane as a helical span at residues 224-244 (GMALALASAGFGVIATFITLF). Topologically, residues 245 to 251 (YDAKGWD) are periplasmic. Residues 252–272 (GAAFALTLFSCAFVGTRLLFP) traverse the membrane as a helical segment. Over 273–282 (NGINRIGGLN) the chain is Cytoplasmic. The helical transmembrane segment at 283-303 (VAMICFSVEIIGLLLVGVATM) threads the bilayer. At 304-308 (PWMAK) the chain is on the periplasmic side. Residues 309–329 (IGVLLAGAGFSLVFPALGVVA) traverse the membrane as a helical segment. Over 330 to 343 (VKAVPQQNQGAALA) the chain is Cytoplasmic. The helical transmembrane segment at 344-364 (TYTVFMDLSLGVTGPLAGLVM) threads the bilayer. Position 365 (Ser365) is a topological domain, periplasmic. A helical transmembrane segment spans residues 366–386 (WAGVPVIYLAAAGLVAIALLL). The Cytoplasmic portion of the chain corresponds to 387-405 (TWRLKKRPPEHVPEAASSS).

It belongs to the major facilitator superfamily. YhhS family.

It is found in the cell inner membrane. Confers high-level resistance to glyphosate when overexpressed. Overexpression has no effect on intracellular arabinose concentrations. This is an uncharacterized protein from Escherichia coli (strain K12).